The primary structure comprises 877 residues: Alpha-glucosidase (877 aa).

Residues 1-23 form the signal peptide; that stretch reads MATVGVLLLCLCLCLFAPRLCSS. Residues 89 to 115 are disordered; that stretch reads VPQDIIPRPAPGDVLHDAPPASSAPLQ. N-linked (GlcNAc...) asparagine glycans are attached at residues Asn-191, Asn-298, Asn-338, and Asn-391. Catalysis depends on residues Asp-437 and Glu-440. Asn-471 carries an N-linked (GlcNAc...) asparagine glycan. The active-site Proton donor is Asp-534. Asn-570 carries an N-linked (GlcNAc...) asparagine glycan.

This sequence belongs to the glycosyl hydrolase 31 family. In terms of tissue distribution, high levels seen in the aleurone and scutellum after germination, while low levels are found in developing seeds.

It carries out the reaction Hydrolysis of terminal, non-reducing (1-&gt;4)-linked alpha-D-glucose residues with release of alpha-D-glucose.. The protein is Alpha-glucosidase of Hordeum vulgare (Barley).